Here is a 629-residue protein sequence, read N- to C-terminus: Arginyl-tRNA--protein transferase 1 (629 aa).

Disordered stretches follow at residues glutamine 274–proline 298 and proline 353–glutamate 405. The span at threonine 282–threonine 295 shows a compositional bias: low complexity. Over residues serine 356–asparagine 396 the composition is skewed to acidic residues.

It belongs to the R-transferase family.

The enzyme catalyses an N-terminal L-alpha-aminoacyl-[protein] + L-arginyl-tRNA(Arg) = an N-terminal L-arginyl-L-aminoacyl-[protein] + tRNA(Arg) + H(+). Functionally, involved in the post-translational conjugation of arginine to the N-terminal aspartate or glutamate of a protein. This arginylation is required for degradation of the protein via the ubiquitin pathway. Does not arginylate cysteine residues. This chain is Arginyl-tRNA--protein transferase 1 (ate1), found in Dictyostelium discoideum (Social amoeba).